A 260-amino-acid chain; its full sequence is MAYVTMKGMLETGVHFGHQTRRWNPKMGTYIFGARNGIHIIDLQQTVKLFRTAHDKVVDTVARGGKVIFIGTKRQAQEAVQTEAGRAGQYYVTNRWMGGTLTNFQTIRKSIDRLKKLEVMFEDGTVNRYQKKEVLRLRREMDKLNLVLGGIKDMENLPQLAFIIDPNREDIAVKECRRLGIPIVAVTDTNCDPDLIDYVIPGNDDAIRAIKLFVGHIADACLEGEAMRKETKAENAEEAMKQAAEAEAEAAAPAAEESAE.

A compositionally biased stretch (basic and acidic residues) spans 228 to 240; it reads RKETKAENAEEAM. The tract at residues 228 to 260 is disordered; that stretch reads RKETKAENAEEAMKQAAEAEAEAAAPAAEESAE. Over residues 241–260 the composition is skewed to low complexity; that stretch reads KQAAEAEAEAAAPAAEESAE.

It belongs to the universal ribosomal protein uS2 family.

This Oleidesulfovibrio alaskensis (strain ATCC BAA-1058 / DSM 17464 / G20) (Desulfovibrio alaskensis) protein is Small ribosomal subunit protein uS2.